Consider the following 180-residue polypeptide: tRNA (cytidine(56)-2'-O)-methyltransferase (180 aa).

S-adenosyl-L-methionine-binding positions include Leu-83, Gly-115–Val-119, and Val-133–Glu-140.

This sequence belongs to the aTrm56 family. As to quaternary structure, homodimer.

Its subcellular location is the cytoplasm. It catalyses the reaction cytidine(56) in tRNA + S-adenosyl-L-methionine = 2'-O-methylcytidine(56) in tRNA + S-adenosyl-L-homocysteine + H(+). In terms of biological role, specifically catalyzes the AdoMet-dependent 2'-O-ribose methylation of cytidine at position 56 in tRNAs. This is tRNA (cytidine(56)-2'-O)-methyltransferase from Methanococcus aeolicus (strain ATCC BAA-1280 / DSM 17508 / OCM 812 / Nankai-3).